Consider the following 548-residue polypeptide: Chaperonin GroEL (548 aa).

Residues Thr-30–Pro-33, Lys-51, Asp-87–Thr-91, Gly-415, and Asn-479–Val-481 contribute to the ATP site.

It belongs to the chaperonin (HSP60) family. In terms of assembly, forms a cylinder of 14 subunits composed of two heptameric rings stacked back-to-back. Interacts with the co-chaperonin GroES.

The protein localises to the cytoplasm. It carries out the reaction ATP + H2O + a folded polypeptide = ADP + phosphate + an unfolded polypeptide.. Functionally, together with its co-chaperonin GroES, plays an essential role in assisting protein folding. The GroEL-GroES system forms a nano-cage that allows encapsulation of the non-native substrate proteins and provides a physical environment optimized to promote and accelerate protein folding. In Stenotrophomonas maltophilia (Pseudomonas maltophilia), this protein is Chaperonin GroEL.